A 3259-amino-acid polypeptide reads, in one-letter code: Striated muscle-specific serine/threonine-protein kinase (3259 aa).

Residues 1–30 (MQKARGTRGEDAGTRAPPSPGVPPKRAKVG) are disordered. Omega-N-methylarginine is present on R33. The Ig-like 1 domain maps to 45–126 (PVFLRPLKNA…GKASCEAVLT (82 aa)). Phosphoserine is present on S141. Disordered regions lie at residues 155–185 (RAFS…TSEE), 198–226 (EQEA…GPRH), 278–716 (PSGL…DDSY), and 816–880 (VRPG…KVSL). A compositionally biased stretch (polar residues) spans 158–185 (STPTGGSDTLVGTSLDTPPTSVTGTSEE). The span at 301-317 (PALPPPSKSALLPPPSP) shows a compositional bias: pro residues. 2 positions are modified to phosphoserine: S368 and S375. Position 379 is a phosphothreonine (T379). 2 positions are modified to phosphoserine: S382 and S385. Residues 404-422 (ILDKLQFFEERRRSLERSD) are compositionally biased toward basic and acidic residues. S423 is subject to Phosphoserine. The residue at position 453 (T453) is a Phosphothreonine. S457, S463, S493, S511, S531, and S554 each carry phosphoserine. The segment covering 459–473 (EELRSPRGSVAERRR) has biased composition (basic and acidic residues). A compositionally biased stretch (basic and acidic residues) spans 510 to 522 (TSREELVRSHESL). 2 stretches are compositionally biased toward basic and acidic residues: residues 624–638 (PESR…KREP) and 663–680 (EKNR…RGPE). Residues 727-817 (PVFEIPLQNM…ASCASSLAVR (91 aa)) enclose the Ig-like 2 domain. Over residues 820–830 (ASTSPFSSPIT) the composition is skewed to polar residues. Ig-like domains are found at residues 874–963 (PTFK…ARLE), 968–1056 (PESR…DELT), and 1069–1157 (PLFT…AQLY). An intrachain disulfide couples C994 to C1046. 2 positions are modified to phosphoserine: S1133 and S1177. The segment at 1162-1185 (RTAASGPSSKLEKMPSIPEEPEHG) is disordered. In terms of domain architecture, Ig-like 6 spans 1193–1283 (PDFLRPLQDL…AACYAHLYVT (91 aa)). In terms of domain architecture, Fibronectin type-III 1 spans 1290 to 1387 (PDGAPQVVAV…PSEPVQLLEH (98 aa)). Positions 1367–1379 (SSGKSSSKPSAPS) are enriched in low complexity. A disordered region spans residues 1367–1386 (SSGKSSSKPSAPSEPVQLLE). The Ig-like 7 domain occupies 1490 to 1578 (PRFESIMEDV…GEVSCKAELS (89 aa)). Residues 1606-1859 (YDIHQEIGRG…AEETLEHPWF (254 aa)) enclose the Protein kinase 1 domain. ATP is bound by residues 1612 to 1620 (IGRGAFSYL) and K1635. D1724 serves as the catalytic Proton acceptor. 3 disordered regions span residues 1913-2244 (MPRR…QMPA), 2336-2451 (AKFK…SPVL), and 2463-2562 (RLSS…SQPN). The segment covering 1918-1927 (PPSGGLSSSS) has biased composition (low complexity). S1993, S2004, S2019, S2020, and S2042 each carry phosphoserine. Basic and acidic residues predominate over residues 2009-2019 (SPRRPELRRGS). An Asymmetric dimethylarginine; alternate modification is found at R2060. An Omega-N-methylarginine; alternate modification is found at R2060. Positions 2069–2081 (AQRLQALRQRLLR) are enriched in low complexity. 2 positions are modified to phosphoserine: S2114 and S2135. R2144 is modified (omega-N-methylarginine). The segment covering 2168–2179 (ESPSLSALSETQ) has biased composition (polar residues). Over residues 2180 to 2189 (PPSPALPSAP) the composition is skewed to pro residues. Phosphoserine occurs at positions 2182 and 2207. A compositionally biased stretch (polar residues) spans 2193-2207 (ITKSPEPSAATSRDS). Over residues 2208 to 2218 (PQPPAPQPVPE) the composition is skewed to pro residues. Basic and acidic residues predominate over residues 2219–2229 (KIPEPKPEPVR). The segment covering 2230–2244 (AAKPAQPPLALQMPA) has biased composition (low complexity). Residues 2336–2345 (AKFKRSRESP) are compositionally biased toward basic and acidic residues. Residues 2346–2355 (LSRGLRLLSR) are compositionally biased toward low complexity. Positions 2356–2372 (SRSEERGPFRGAEDDGI) are enriched in basic and acidic residues. At S2376 the chain carries Phosphoserine. Phosphothreonine is present on T2380. Over residues 2384–2395 (LVRRPERSRSVQ) the composition is skewed to basic and acidic residues. Phosphoserine is present on residues S2410, S2414, S2438, S2439, S2444, and S2448. Low complexity predominate over residues 2463 to 2484 (RLSSRLQRSGSSEDSGGASGRS). A compositionally biased stretch (polar residues) spans 2510-2520 (QLASQTGATTP). 2 positions are modified to phosphoserine: S2521 and S2524. The span at 2521-2540 (SAESLGSEASGTSGSSAPGE) shows a compositional bias: low complexity. Residues 2543 to 2554 (SRHRWGLSRLRK) are compositionally biased toward basic residues. S2559 is modified (phosphoserine). One can recognise an Ig-like 8 domain in the interval 2583–2673 (PPVFHIKLKD…GSITSSCTVA (91 aa)). C2605 and C2657 are disulfide-bonded. The region spanning 2680–2774 (KLAPPEVPQT…KVFIRGTQDS (95 aa)) is the Fibronectin type-III 2 domain. T2771 is subject to Phosphothreonine. 2 disordered regions span residues 2771–2829 (TQDS…MSAN) and 2855–2957 (TQQA…PQKP). The residue at position 2774 (S2774) is a Phosphoserine. Residues 2793–2810 (RAPPPDSPTSLVPTPPLA) show a composition bias toward pro residues. The span at 2814 to 2828 (SQASTLSPSTSSMSA) shows a compositional bias: low complexity. Residues 2859 to 2965 (EPSPPSILVT…KPYTFLEEKA (107 aa)) enclose the Fibronectin type-III 3 domain. A compositionally biased stretch (polar residues) spans 2880 to 2907 (GTLTPTSSPQGVKPAPSSSSLYMVTSFV). The segment covering 2910–2924 (PPDPQPPAPEPPPEP) has biased composition (pro residues). Over residues 2940–2950 (SSPTPESTTLR) the composition is skewed to polar residues. S2941 carries the post-translational modification Phosphoserine. The 253-residue stretch at 2958–3210 (YTFLEEKARG…LQDCLAHPWL (253 aa)) folds into the Protein kinase 2 domain. ATP-binding positions include 2964 to 2972 (KARGRFGVV) and K2987. D3077 (proton acceptor) is an active-site residue.

Belongs to the protein kinase superfamily. CAMK Ser/Thr protein kinase family. In terms of assembly, interacts with MTM1. May be autophosphorylated. In terms of tissue distribution, isoform 2 is highly expressed in differentiated arterial smooth muscle cells (ASMC) in the medial layer of the aorta. Weakly detected in brain and testis and to a lesser extent in organs rich in striated muscle or visceral smooth muscle.

Its subcellular location is the nucleus. It catalyses the reaction L-seryl-[protein] + ATP = O-phospho-L-seryl-[protein] + ADP + H(+). The enzyme catalyses L-threonyl-[protein] + ATP = O-phospho-L-threonyl-[protein] + ADP + H(+). Functionally, isoform 2 may have a role in regulating the growth and differentiation of arterial smooth muscle cells. This chain is Striated muscle-specific serine/threonine-protein kinase (Speg), found in Rattus norvegicus (Rat).